Reading from the N-terminus, the 278-residue chain is Small ribosomal subunit biogenesis GTPase RsgA (278 aa).

The 157-residue stretch at 62 to 218 folds into the CP-type G domain; the sequence is KNTLVRPKVV…ICDTPGFNVI (157 aa). Residues 112-115 and 162-170 each bind GTP; these read TKND and GQSGVGKSS. Residues C241, C246, H248, and C254 each contribute to the Zn(2+) site.

This sequence belongs to the TRAFAC class YlqF/YawG GTPase family. RsgA subfamily. In terms of assembly, monomer. Associates with 30S ribosomal subunit, binds 16S rRNA. Requires Zn(2+) as cofactor.

It localises to the cytoplasm. Functionally, one of several proteins that assist in the late maturation steps of the functional core of the 30S ribosomal subunit. Helps release RbfA from mature subunits. May play a role in the assembly of ribosomal proteins into the subunit. Circularly permuted GTPase that catalyzes slow GTP hydrolysis, GTPase activity is stimulated by the 30S ribosomal subunit. This chain is Small ribosomal subunit biogenesis GTPase RsgA, found in Mycoplasma pneumoniae (strain ATCC 29342 / M129 / Subtype 1) (Mycoplasmoides pneumoniae).